Here is a 390-residue protein sequence, read N- to C-terminus: Isotocin receptor (390 aa).

Over 1–48 the chain is Extracellular; it reads MEEMFKEQDFWSFNESSRNSTVGNETFGGNQTVNPLKRNEEVAKVEVT. N-linked (GlcNAc...) asparagine glycans are attached at residues Asn14, Asn19, Asn24, and Asn30. A helical transmembrane segment spans residues 49 to 69; the sequence is VLALVLFLALAGNLCVLIAIY. At 70–86 the chain is on the cytoplasmic side; it reads TAKHTQSRMYYLMKHLS. A helical membrane pass occupies residues 87-107; it reads IADLVVAVFQVLPQLIWDITF. At 108-124 the chain is on the extracellular side; it reads RFYGPDFLCRLVKYLQT. The cysteines at positions 116 and 191 are disulfide-linked. Residues 125–145 form a helical membrane-spanning segment; that stretch reads VGMFASTYMLVLMSIDRCIAI. At 146–160 the chain is on the cytoplasmic side; it reads CQPLRSLHKRKDRCY. Residues 161–181 traverse the membrane as a helical segment; that stretch reads VIVSWALSLVFSVPQVYIFSL. The Extracellular segment spans residues 182–206; that stretch reads REIGNGVYDCWGDFVQPWGAKAYIT. The chain crosses the membrane as a helical span at residues 207 to 227; it reads WISLTIYIIPVAILGGCYGLI. At 228-276 the chain is on the cytoplasmic side; the sequence is SFKIWQNFKRKTKKDQCITLTTAASKANALARVSSVKLVSKAKITTVKM. Residues 277-297 traverse the membrane as a helical segment; sequence TFVIVLAYIVCWTPFFFVQMW. Over 298 to 311 the chain is Extracellular; that stretch reads SAWDPEAPREAMPF. The helical transmembrane segment at 312-332 threads the bilayer; it reads IISMLLASLNSCCNPWIYMFF. Topologically, residues 333–390 are cytoplasmic; that stretch reads AGHLFHDLKQSLLCCSTLYLKSSQCRCDQEHDSRKSNCSTYVIKSTSSQRSITQSSIT.

This sequence belongs to the G-protein coupled receptor 1 family. Vasopressin/oxytocin receptor subfamily. In terms of tissue distribution, expressed in brain, intestine, bladder, skeletal muscle, lateral line, gills and kidney.

The protein resides in the cell membrane. Its function is as follows. Binds to isotocin. Can also be activated by vasotocin, mesotocin, oxytocin and Arg-vasopressin, although these have lower potencies than isotocin. Produces an induction of membrane chloride currents indicating that it is coupled to the inositol phosphate/calcium pathway. This is Isotocin receptor from Catostomus commersonii (White sucker).